Consider the following 464-residue polypeptide: Gamma-aminobutyric acid receptor subunit alpha-5 (464 aa).

Residues 1–25 (MDNGMLSRFIMTKTLLVFCISMTLS) form the signal peptide. At 26–260 (SHFGFSQMPT…FHLKRKIGYF (235 aa)) the chain is on the extracellular side. N-linked (GlcNAc...) asparagine glycosylation occurs at asparagine 45. Residue arginine 101 participates in 4-aminobutanoate binding. N-linked (GlcNAc...) asparagine glycosylation occurs at asparagine 145. Threonine 164 is a binding site for 4-aminobutanoate. The cysteines at positions 173 and 187 are disulfide-linked. Residues asparagine 207 and asparagine 236 are each glycosylated (N-linked (GlcNAc...) asparagine). Transmembrane regions (helical) follow at residues 261–281 (VIQT…SFWL), 287–308 (PART…ISAR), and 319–340 (AMDW…EFAT). Topologically, residues 341–429 (VNYFTKRGWA…TYNSISKIDK (89 aa)) are cytoplasmic. Lysine 355 is covalently cross-linked (Glycyl lysine isopeptide (Lys-Gly) (interchain with G-Cter in ubiquitin)). Positions 382–414 (KLTHPPNIPKEQLPGGTGNAVGTASIRASEEKT) are disordered. The chain crosses the membrane as a helical span at residues 430 to 450 (MSRIVFPILFGTFNLVYWATY).

It belongs to the ligand-gated ion channel (TC 1.A.9) family. Gamma-aminobutyric acid receptor (TC 1.A.9.5) subfamily. GABRA5 sub-subfamily. Heteropentamer, formed by a combination of alpha (GABRA1-6), beta (GABRB1-3), gamma (GABRG1-3), delta (GABRD), epsilon (GABRE), rho (GABRR1-3), pi (GABRP) and theta (GABRQ) chains, each subunit exhibiting distinct physiological and pharmacological properties. As to expression, expressed in brain areas such as cerebral cortex, hippocampal formation and olfactory bulb granular layer.

The protein resides in the postsynaptic cell membrane. Its subcellular location is the cell membrane. It catalyses the reaction chloride(in) = chloride(out). With respect to regulation, allosterically potentiated by alphaxalone. Allosterically inhibited by pregnenolone sulfate. Inhibited by zinc and lanthanum. In terms of biological role, alpha subunit of the heteropentameric ligand-gated chloride channel gated by gamma-aminobutyric acid (GABA), a major inhibitory neurotransmitter in the brain. GABA-gated chloride channels, also named GABA(A) receptors (GABAAR), consist of five subunits arranged around a central pore and contain GABA active binding site(s) located at the alpha and beta subunit interface(s). When activated by GABA, GABAARs selectively allow the flow of chloride anions across the cell membrane down their electrochemical gradient. GABAARs containing alpha-5/GABRA5 subunits are mainly extrasynaptic and contribute to the tonic GABAergic inhibition in the hippocampus. Extrasynaptic alpha-5-containing GABAARs in CA1 pyramidal neurons play a role in learning and memory processes. This chain is Gamma-aminobutyric acid receptor subunit alpha-5, found in Rattus norvegicus (Rat).